The chain runs to 192 residues: Phosphoheptose isomerase (192 aa).

Positions 35-192 (LIETLENQGK…CIERHFAHKN (158 aa)) constitute an SIS domain. 50–52 (NGG) is a binding site for substrate. Residues His59 and Glu63 each contribute to the Zn(2+) site. Substrate-binding positions include Glu63, 92–93 (ND), 118–120 (STS), Ser123, and Gln170. Residues Gln170 and His178 each coordinate Zn(2+).

The protein belongs to the SIS family. GmhA subfamily. Homotetramer. The cofactor is Zn(2+).

It localises to the cytoplasm. It carries out the reaction 2 D-sedoheptulose 7-phosphate = D-glycero-alpha-D-manno-heptose 7-phosphate + D-glycero-beta-D-manno-heptose 7-phosphate. The protein operates within carbohydrate biosynthesis; D-glycero-D-manno-heptose 7-phosphate biosynthesis; D-glycero-alpha-D-manno-heptose 7-phosphate and D-glycero-beta-D-manno-heptose 7-phosphate from sedoheptulose 7-phosphate: step 1/1. Its function is as follows. Catalyzes the isomerization of sedoheptulose 7-phosphate in D-glycero-D-manno-heptose 7-phosphate. This chain is Phosphoheptose isomerase, found in Helicobacter pylori (strain HPAG1).